Consider the following 212-residue polypeptide: Probable chemoreceptor glutamine deamidase CheD (212 aa).

The protein belongs to the CheD family.

The enzyme catalyses L-glutaminyl-[protein] + H2O = L-glutamyl-[protein] + NH4(+). Its function is as follows. Probably deamidates glutamine residues to glutamate on methyl-accepting chemotaxis receptors (MCPs), playing an important role in chemotaxis. This chain is Probable chemoreceptor glutamine deamidase CheD, found in Oleidesulfovibrio alaskensis (strain ATCC BAA-1058 / DSM 17464 / G20) (Desulfovibrio alaskensis).